The following is a 279-amino-acid chain: Diaminopimelate epimerase (279 aa).

Positions 13 and 66 each coordinate substrate. Catalysis depends on C75, which acts as the Proton donor. Substrate contacts are provided by residues 76 to 77 (GN), N164, N197, and 215 to 216 (ER). C224 (proton acceptor) is an active-site residue. 225–226 (GT) is a substrate binding site.

This sequence belongs to the diaminopimelate epimerase family. In terms of assembly, homodimer.

Its subcellular location is the cytoplasm. It catalyses the reaction (2S,6S)-2,6-diaminopimelate = meso-2,6-diaminopimelate. It participates in amino-acid biosynthesis; L-lysine biosynthesis via DAP pathway; DL-2,6-diaminopimelate from LL-2,6-diaminopimelate: step 1/1. Functionally, catalyzes the stereoinversion of LL-2,6-diaminopimelate (L,L-DAP) to meso-diaminopimelate (meso-DAP), a precursor of L-lysine and an essential component of the bacterial peptidoglycan. In Brachyspira hyodysenteriae (strain ATCC 49526 / WA1), this protein is Diaminopimelate epimerase.